Reading from the N-terminus, the 152-residue chain is Small ribosomal subunit protein uS15 (152 aa).

Residues 1–11 (MAKMHTKRKGK) show a composition bias toward basic residues. The tract at residues 1–24 (MAKMHTKRKGKSSSTRPNRTEPPE) is disordered.

This sequence belongs to the universal ribosomal protein uS15 family. In terms of assembly, part of the 30S ribosomal subunit.

The protein is Small ribosomal subunit protein uS15 of Methanosarcina mazei (strain ATCC BAA-159 / DSM 3647 / Goe1 / Go1 / JCM 11833 / OCM 88) (Methanosarcina frisia).